Reading from the N-terminus, the 205-residue chain is Protein N-terminal glutamine amidohydrolase (205 aa).

Active-site residues include cysteine 20, histidine 74, and aspartate 90.

It belongs to the NTAQ1 family. Monomer.

The catalysed reaction is N-terminal L-glutaminyl-[protein] + H2O = N-terminal L-glutamyl-[protein] + NH4(+). Mediates the side-chain deamidation of N-terminal glutamine residues to glutamate, an important step in N-end rule pathway of protein degradation. Conversion of the resulting N-terminal glutamine to glutamate renders the protein susceptible to arginylation, polyubiquitination and degradation as specified by the N-end rule. Does not act on substrates with internal or C-terminal glutamine and does not act on non-glutamine residues in any position. In Drosophila pseudoobscura pseudoobscura (Fruit fly), this protein is Protein N-terminal glutamine amidohydrolase (tun).